A 611-amino-acid polypeptide reads, in one-letter code: Mitogen-activated protein kinase 10 (611 aa).

The Protein kinase domain maps to 25-316 (YKIQEVIGKG…AEEALAHPYF (292 aa)). ATP-binding positions include 31-39 (IGKGSYGVV) and K54. D151 serves as the catalytic Proton acceptor. The residue at position 187 (T187) is a Phosphothreonine. The TXY motif lies at 187–189 (TDY). Y189 carries the phosphotyrosine modification. The segment at 394–481 (ENGGNGPVIP…RVVGPVLPYE (88 aa)) is disordered. A compositionally biased stretch (basic and acidic residues) spans 426-439 (EQPRIGPSRDKPSD).

It belongs to the protein kinase superfamily. CMGC Ser/Thr protein kinase family. MAP kinase subfamily. Post-translationally, dually phosphorylated on Thr-187 and Tyr-189, which activates the enzyme.

It catalyses the reaction L-seryl-[protein] + ATP = O-phospho-L-seryl-[protein] + ADP + H(+). The catalysed reaction is L-threonyl-[protein] + ATP = O-phospho-L-threonyl-[protein] + ADP + H(+). With respect to regulation, activated by threonine and tyrosine phosphorylation. The sequence is that of Mitogen-activated protein kinase 10 (MPK10) from Oryza sativa subsp. japonica (Rice).